Reading from the N-terminus, the 238-residue chain is Probable transcriptional regulatory protein CPn_0573/CP_0176/CPj0573/CpB0595 (238 aa).

Residues 1–20 (MAGHSKWANTKHRKERADHK) are disordered. Residues 9-20 (NTKHRKERADHK) show a composition bias toward basic residues.

This sequence belongs to the TACO1 family.

It localises to the cytoplasm. The chain is Probable transcriptional regulatory protein CPn_0573/CP_0176/CPj0573/CpB0595 from Chlamydia pneumoniae (Chlamydophila pneumoniae).